The chain runs to 789 residues: Transducer protein Htr6 (789 aa).

2 consecutive transmembrane segments (helical) span residues 29–49 and 294–314; these read FAVA…FAFQ and TVTV…IALG. HAMP domains are found at residues 315-367 and 409-462; these read RHTV…DRIQ and ERLQ…ATIA. Residues 481–717 form the Methyl-accepting transducer domain; that stretch reads GAEEIETTSQ…SVVRRVDDVA (237 aa). The interval 763–789 is disordered; it reads NQFETRADADEPDADTTVDASADDTGD. The segment covering 772–789 has biased composition (acidic residues); sequence DEPDADTTVDASADDTGD.

It belongs to the methyl-accepting chemotaxis (MCP) protein family. Post-translationally, methylated by CheR.

The protein localises to the cell membrane. Its function is as follows. Potentially involved in chemo- or phototactic signal transduction. This is Transducer protein Htr6 (htr6) from Halobacterium salinarum (strain ATCC 29341 / DSM 671 / R1).